A 320-amino-acid polypeptide reads, in one-letter code: SPX domain-containing protein 4 (320 aa).

The SPX domain maps to 1-170; it reads MKFGKDFRSH…GGLLSLPFTQ (170 aa). Disordered regions lie at residues 209 to 233 and 275 to 320; these read SSSAKLQPQNDDAASHDPASSVDVE and CSGA…PRDE. Residues 278-289 are compositionally biased toward polar residues; the sequence is AITSESDSYSDS. Acidic residues predominate over residues 290–299; sequence QIEDAEDDDK. A compositionally biased stretch (polar residues) spans 304–313; the sequence is REQNTAQNAA.

In terms of assembly, homodimer. Interacts (via N-terminus) with PHR2 (via C-terminus) in the presence of inositol polyphosphate. Interacts with BHLH6. Post-translationally, degraded under Pi starvation conditions through the ubiquitin/26S proteasome pathway. Widely expressed. Detected in root cells, with the exception of epidermis, and in mesophyll and vascular bundles in leaves.

Its subcellular location is the membrane. The protein localises to the nucleus. It is found in the cytoplasm. Its function is as follows. Inositol polyphosphate sensor that associates with transcription factors to regulate Pi starvation responses. The SPX domain provides a basic binding surface for inositol polyphosphate signaling molecules. Interacts with PHR2 to inhibit its translocation to the nucleus and repress its DNA-binding activity, and then negatively regulate Pi signaling. This Oryza sativa subsp. japonica (Rice) protein is SPX domain-containing protein 4.